The following is a 391-amino-acid chain: Terminal nucleotidyltransferase 5C (391 aa).

This sequence belongs to the TENT family. Interacts with BCCIP and PABPC1; the interaction has no effect on TENT5C poly(A) polymerase function. Interacts with PLK4; this interaction leads to the TENT5C recruitment into the centrosome.

It localises to the nucleus. Its subcellular location is the cytoplasm. It is found in the cytoskeleton. The protein resides in the microtubule organizing center. The protein localises to the centrosome. It catalyses the reaction RNA(n) + ATP = RNA(n)-3'-adenine ribonucleotide + diphosphate. Catalyzes the transfer of one adenosine molecule from an ATP to an mRNA poly(A) tail bearing a 3'-OH terminal group and enhances mRNA stability and gene expression. Can also elongate RNA oligos ending with uridine molecule, provided that the sequence is adenosine-rich. Mainly targets mRNAs encoding endoplasmic reticulum-targeted protein. This is Terminal nucleotidyltransferase 5C from Macaca fascicularis (Crab-eating macaque).